The sequence spans 596 residues: Beta-fructofuranosidase, insoluble isoenzyme 7 (596 aa).

The first 24 residues, 1–24 (MARLGLAVCAASFHLFLLLASTSS), serve as a signal peptide directing secretion. Residues 51 to 54 (WQND), glutamine 70, and tryptophan 78 contribute to the substrate site. Aspartate 54 is a catalytic residue. Asparagine 82 carries an N-linked (GlcNAc...) asparagine glycan. Residues 115 to 116 (WS), 179 to 180 (RD), and glutamate 234 contribute to the substrate site. N-linked (GlcNAc...) asparagine glycosylation is present at asparagine 330. Cysteine 432 and cysteine 478 are disulfide-bonded. Asparagine 552 carries N-linked (GlcNAc...) asparagine glycosylation.

Belongs to the glycosyl hydrolase 32 family.

Its subcellular location is the secreted. The protein localises to the extracellular space. It localises to the apoplast. The protein resides in the cell wall. It catalyses the reaction Hydrolysis of terminal non-reducing beta-D-fructofuranoside residues in beta-D-fructofuranosides.. Its function is as follows. May play a role in sucrose partitioning during seed development. The polypeptide is Beta-fructofuranosidase, insoluble isoenzyme 7 (CIN7) (Oryza sativa subsp. indica (Rice)).